Consider the following 466-residue polypeptide: uncharacterized protein (466 aa).

The segment at methionine 1–lysine 22 is disordered. The span at arginine 7–tyrosine 19 shows a compositional bias: polar residues. Serine 40 and serine 42 each carry phosphoserine. An RRM domain is found at tyrosine 108–histidine 183. The segment at arginine 186 to aspartate 207 is disordered. The span at proline 188–aspartate 207 shows a compositional bias: basic and acidic residues. The region spanning leucine 209–threonine 368 is the CID domain. The residue at position 371 (serine 371) is a Phosphoserine. Over residues serine 425–proline 436 the composition is skewed to low complexity. The interval serine 425–phenylalanine 448 is disordered.

Its subcellular location is the nucleus. It localises to the cytoplasm. This is an uncharacterized protein from Schizosaccharomyces pombe (strain 972 / ATCC 24843) (Fission yeast).